The sequence spans 257 residues: MSKLKLNDVNIYYGDFHAVQNVNLEVPARSVTAFIGPSGCGKSTVLRSINRMHEVIPGAYVEGEILLDGENIYGPKIDPVAVRNTIGMVFQKANPFPTMSIEDNVVAGLRLSGEKNKKKLKEVAEQSLRGANLWEEVKDRLDKPGGGLSGGQQQRLCIARAIAVKPEVLLMDEPCSALDPISTLAVEDLIHELKEEFTIVIVTHNMQQAARVSDQTAFYSLEATGKPGRLVELGPTKKIFENPDNKETEDYISGRFG.

Residues 4 to 252 (LKLNDVNIYY…PDNKETEDYI (249 aa)) enclose the ABC transporter domain. 36–43 (GPSGCGKS) is a binding site for ATP.

This sequence belongs to the ABC transporter superfamily. Phosphate importer (TC 3.A.1.7) family. The complex is composed of two ATP-binding proteins (PstB), two transmembrane proteins (PstC and PstA) and a solute-binding protein (PstS).

It is found in the cell membrane. It catalyses the reaction phosphate(out) + ATP + H2O = ADP + 2 phosphate(in) + H(+). Its function is as follows. Part of the ABC transporter complex PstSACB involved in phosphate import. Responsible for energy coupling to the transport system. The sequence is that of Phosphate import ATP-binding protein PstB from Corynebacterium efficiens (strain DSM 44549 / YS-314 / AJ 12310 / JCM 11189 / NBRC 100395).